Reading from the N-terminus, the 193-residue chain is 3-isopropylmalate dehydratase small subunit (193 aa).

Belongs to the LeuD family. LeuD type 1 subfamily. Heterodimer of LeuC and LeuD.

It catalyses the reaction (2R,3S)-3-isopropylmalate = (2S)-2-isopropylmalate. Its pathway is amino-acid biosynthesis; L-leucine biosynthesis; L-leucine from 3-methyl-2-oxobutanoate: step 2/4. Functionally, catalyzes the isomerization between 2-isopropylmalate and 3-isopropylmalate, via the formation of 2-isopropylmaleate. The protein is 3-isopropylmalate dehydratase small subunit of Bacillus cereus (strain ZK / E33L).